A 221-amino-acid chain; its full sequence is Uracil-DNA glycosylase 1 (221 aa).

D61 acts as the Proton acceptor in catalysis.

Belongs to the uracil-DNA glycosylase (UDG) superfamily. UNG family.

It localises to the cytoplasm. The enzyme catalyses Hydrolyzes single-stranded DNA or mismatched double-stranded DNA and polynucleotides, releasing free uracil.. Functionally, excises uracil residues from the DNA which can arise as a result of misincorporation of dUMP residues by DNA polymerase or due to deamination of cytosine. The sequence is that of Uracil-DNA glycosylase 1 from Listeria monocytogenes serovar 1/2a (strain ATCC BAA-679 / EGD-e).